A 276-amino-acid polypeptide reads, in one-letter code: Rhomboid protease GlpG (276 aa).

Transmembrane regions (helical) follow at residues Gly94–Ile114, Ile142–Gly162, Leu169–Gln189, Phe192–Trp212, Leu229–Met249, and Ala250–Leu270. The Nucleophile role is filled by Ser201. Residue His254 is part of the active site.

It belongs to the peptidase S54 family.

Its subcellular location is the cell inner membrane. It carries out the reaction Cleaves type-1 transmembrane domains using a catalytic dyad composed of serine and histidine that are contributed by different transmembrane domains.. Rhomboid-type serine protease that catalyzes intramembrane proteolysis. In Salmonella dublin (strain CT_02021853), this protein is Rhomboid protease GlpG.